A 172-amino-acid polypeptide reads, in one-letter code: Early nodulin-like protein 17 (172 aa).

An N-terminal signal peptide occupies residues 1-26; sequence MARFTVLITAVVLAFLMAAPMPGVTA. The Phytocyanin domain occupies 27-127; that stretch reads KKYTVGENKF…GMKLSVKVEK (101 aa). Residues N42, N73, N88, and N101 are each glycosylated (N-linked (GlcNAc...) asparagine). C80 and C115 are disulfide-bonded. G141 carries the GPI-anchor amidated glycine lipid modification. Positions 142–172 are cleaved as a propeptide — removed in mature form; the sequence is SVSMVTGLAQFMIPVSLFAFPAMWDVISRMW.

It belongs to the early nodulin-like (ENODL) family.

The protein localises to the cell membrane. In terms of biological role, may act as a carbohydrate transporter. The protein is Early nodulin-like protein 17 of Arabidopsis thaliana (Mouse-ear cress).